The primary structure comprises 650 residues: Probable protein phosphatase 2C 36 (650 aa).

Residues 146 to 166 (SGKKTKEKAKLKKSGSKSFTK) form a disordered region. Over residues 148-166 (KKTKEKAKLKKSGSKSFTK) the composition is skewed to basic residues. Positions 239-641 (ESALEEPKIQ…DDVSVIVISL (403 aa)) constitute a PPM-type phosphatase domain. Mn(2+) is bound by residues D276, G277, D569, and D632.

The protein belongs to the PP2C family. It depends on Mg(2+) as a cofactor. Requires Mn(2+) as cofactor.

The protein localises to the nucleus. The catalysed reaction is O-phospho-L-seryl-[protein] + H2O = L-seryl-[protein] + phosphate. It catalyses the reaction O-phospho-L-threonyl-[protein] + H2O = L-threonyl-[protein] + phosphate. The chain is Probable protein phosphatase 2C 36 (PLL3) from Arabidopsis thaliana (Mouse-ear cress).